We begin with the raw amino-acid sequence, 138 residues long: Actin-related protein 2/3 complex subunit 5 (138 aa).

Residues 1 to 21 (MNYEDDNVESGQAGKSDAEYK) form a disordered region.

This sequence belongs to the ARPC5 family. Component of the Arp2/3 complex composed of arpB/Arp2, arpC/Arp3, arcA/p41-arc, arcB/p34-arc, arcC/p21-arc, arcD/p20-arc and arcE/p16-arc. Interacts with carmil (via the region between the LRR domain and COOH-terminal proline-rich domain); carmil is required for Arp2/3-dependent actin nucleation. Arp2/3 complex, MyoB, MyoC, and the alpha and beta subunits of capping protein all form a larger complex with carmil.

The protein resides in the cytoplasm. Its subcellular location is the cytoskeleton. The protein localises to the cytosol. It localises to the cell cortex. It is found in the cell projection. The protein resides in the pseudopodium. Functionally, functions as a component of the Arp2/3 complex which is involved in regulation of actin polymerization and together with an activating nucleation-promoting factor (NPF) mediates the formation of branched actin networks. Seems to contact the pointed end of the daughter actin filament. The Arp2/3 complex is involved in organizing the actin system in cell motility and chemotaxis, in phagocytosis and macropinocytosis, at late steps of endosome processing, and in mitosis. In concert with a group of other proteins, the Arp2/3 complex plays a general role in the rapid activation and adaptation of the actin system to its multiple functions. This Dictyostelium discoideum (Social amoeba) protein is Actin-related protein 2/3 complex subunit 5 (arcE).